An 886-amino-acid polypeptide reads, in one-letter code: General transcription factor 3C polypeptide 3 (886 aa).

Positions 1–121 are disordered; that stretch reads MSGFSPELID…TPEQPTAGDV (121 aa). Serine 2 bears the N-acetylserine mark. Over residues 12 to 44 the composition is skewed to basic and acidic residues; the sequence is LEGKISFEEFERRREERKTREKKSLQEKGKLSA. Serine 43 is subject to Phosphoserine. Residues 53–63 are compositionally biased toward polar residues; sequence VPSSSGINSTK. Positions 92-113 are enriched in acidic residues; it reads ENEDDEEEEEEEEEEEEEEETP. TPR repeat units follow at residues 149–182, 183–216, 217–250, 252–284, 290–323, 326–361, 421–454, 456–489, 491–523, 733–766, and 811–844; these read LRGL…APLA, YEPF…NPSD, TEEW…EPTN, RYLW…LSPS, MQLA…HQGL, MEDV…EKKT, GDLY…ERYN, AVVW…APLH, DARI…DTLA, HALC…HPDE, and QESF…PPLV. Serine 282 bears the Phosphoserine mark.

As to quaternary structure, part of the TFIIIC subcomplex TFIIIC2, consisting of six subunits, GTF3C1, GTF3C2, GTF3C3, GTF3C4, GTF3C5 and GTF3C6. Interacts with BRF1 and TBP.

It localises to the nucleus. Functionally, involved in RNA polymerase III-mediated transcription. Integral, tightly associated component of the DNA-binding TFIIIC2 subcomplex that directly binds tRNA and virus-associated RNA promoters. This Homo sapiens (Human) protein is General transcription factor 3C polypeptide 3 (GTF3C3).